The primary structure comprises 517 residues: Cytochrome P450 monooxygenase cdmJ (517 aa).

The helical transmembrane segment at 15–35 threads the bilayer; that stretch reads YMWSLTLFALCLSAILMFPFL. Residue asparagine 404 is glycosylated (N-linked (GlcNAc...) asparagine). Cysteine 451 contributes to the heme binding site.

The protein belongs to the cytochrome P450 family. The cofactor is heme.

It localises to the membrane. It catalyses the reaction 3-hydroxypentacecilide A + NADPH + O2 + H(+) = chrodrimanin F + NADP(+) + H2O. The catalysed reaction is chrodrimanin C + NADPH + O2 + H(+) = chrodrimanin H + NADP(+) + H2O. The enzyme catalyses verruculide A + NADPH + O2 + H(+) = chrodrimanin E + NADP(+) + H2O. It carries out the reaction chrodrimanin T + NADPH + O2 + H(+) = chrodrimanin A + NADP(+) + H2O. The protein operates within secondary metabolite biosynthesis; terpenoid biosynthesis. Cytochrome P450 monooxygenase; part of the gene cluster that mediates the biosynthesis of chrodrimanin B, a meroterpenoid that acts as a potent blocker of insect GABA-gated chloride channels. The first step of the pathway is the biosynthesis of 6-hydroxymellein by the polyketide synthase cdmE. The prenyltransferase cdmH acts as a 6-hydroxymellein 5-farnesyltransferase and produces the hydrophobic metabolite verruculide C. The FAD-dependent monooxygenase cdmI further converts verruculide C into verruculide B. The terpene cyclase cdmG then produced the pentacyclic molecule 3-hydroxypentacecilide A, the backbone structure of chrodrimanin B, via folding the farnesyl moiety of the substrate into the chair-boat conformation. The short-chain dehydrogenase/reductase cdmF functions as the 3-OH dehydrogenase that oxidizes the C-3 hydroxyl group of 3-hydroxypentacecilide A and produces chrodrimanin C, the dehydrogenated product of 3-hydroxypentacecilide A. The cytochrome P450 monooxygenase cdmJ then accepts both 3-hydroxypentacecilide A and chrodrimanin C and functions as a C-7-beta-hydroxylase to produce respectively chrodrimanin H and chrodrimanin F. The dioxygenase cdmA accepts chrodrimanin H to afford chrodrimanin E, which is further transformed to chrodrimanin A by the dioxygenase cdmD. CdmA can also accept chrodrimanin C as substrate to convert it into verruculide A, which is further converted into chrodrimanin T by cdmD. The last step of the biosynthesis is proposed to be performed by the acetyltransferase cdmC which acetylates chrodrimanin A to yield chrodrimanin B. The pathway may also lead to the production of additional shunt products, including chrodrimanins T and U. In Talaromyces verruculosus (Penicillium verruculosum), this protein is Cytochrome P450 monooxygenase cdmJ.